The sequence spans 287 residues: Ribosomal RNA small subunit methyltransferase A (287 aa).

N28, L30, G55, E77, D103, and N123 together coordinate S-adenosyl-L-methionine.

It belongs to the class I-like SAM-binding methyltransferase superfamily. rRNA adenine N(6)-methyltransferase family. RsmA subfamily.

Its subcellular location is the cytoplasm. It catalyses the reaction adenosine(1518)/adenosine(1519) in 16S rRNA + 4 S-adenosyl-L-methionine = N(6)-dimethyladenosine(1518)/N(6)-dimethyladenosine(1519) in 16S rRNA + 4 S-adenosyl-L-homocysteine + 4 H(+). Its function is as follows. Specifically dimethylates two adjacent adenosines (A1518 and A1519) in the loop of a conserved hairpin near the 3'-end of 16S rRNA in the 30S particle. May play a critical role in biogenesis of 30S subunits. The protein is Ribosomal RNA small subunit methyltransferase A of Rhodopseudomonas palustris (strain BisA53).